The sequence spans 514 residues: Protein farnesyltransferase subunit beta (514 aa).

Residues 1 to 13 (MRHHTKNLRRRAI) are compositionally biased toward basic residues. A disordered region spans residues 1–56 (MRHHTKNLRRRAIFLRTTPRGNMDSSSSVATSTSSSSNHRLVRSSEGSPSAGGDDI). The segment covering 25–39 (SSSSVATSTSSSSNH) has biased composition (low complexity). PFTB repeat units lie at residues 180–221 (AESL…AVVG), 231–272 (RRAL…SLLN), 293–334 (FTGL…SLLG), 346–388 (IERL…PLIE), and 410–454 (REGL…SSAQ). (2E,6E)-farnesyl diphosphate is bound by residues 319-322 (HGAY) and 367-370 (RTNK). Zn(2+)-binding residues include Asp373 and Cys375. A (2E,6E)-farnesyl diphosphate-binding site is contributed by 376–379 (YSHW). His442 provides a ligand contact to Zn(2+).

It belongs to the protein prenyltransferase subunit beta family. As to quaternary structure, heterodimer of an alpha and a beta subunit. Interacts with RAS1 and RAS2. Requires Zn(2+) as cofactor. In terms of tissue distribution, highly expressed in mycelium, conidium, conidial germination, early formed appressorium and the late infection hypha.

The protein localises to the cytoplasm. The enzyme catalyses L-cysteinyl-[protein] + (2E,6E)-farnesyl diphosphate = S-(2E,6E)-farnesyl-L-cysteinyl-[protein] + diphosphate. In terms of biological role, catalyzes the transfer of a farnesyl moiety from farnesyl diphosphate to a cysteine at the fourth position from the C-terminus of several proteins having the C-terminal sequence Cys-aliphatic-aliphatic-X. The beta subunit is responsible for peptide-binding. This chain is Protein farnesyltransferase subunit beta (RAM1), found in Pyricularia oryzae (strain 70-15 / ATCC MYA-4617 / FGSC 8958) (Rice blast fungus).